We begin with the raw amino-acid sequence, 433 residues long: tRNA-2-methylthio-N(6)-dimethylallyladenosine synthase (433 aa).

The MTTase N-terminal domain occupies 3–118 (KKLFIQTLGC…ITKAVNTPKF (116 aa)). [4Fe-4S] cluster contacts are provided by cysteine 12, cysteine 49, cysteine 81, cysteine 150, cysteine 154, and cysteine 157. The Radical SAM core domain occupies 136 to 369 (RGSPYKSHIN…QNRHSEILDE (234 aa)). In terms of domain architecture, TRAM spans 372 to 433 (AAQKDKIFDV…RMVLYGELQI (62 aa)).

It belongs to the methylthiotransferase family. MiaB subfamily. In terms of assembly, monomer. [4Fe-4S] cluster serves as cofactor.

It localises to the cytoplasm. It catalyses the reaction N(6)-dimethylallyladenosine(37) in tRNA + (sulfur carrier)-SH + AH2 + 2 S-adenosyl-L-methionine = 2-methylsulfanyl-N(6)-dimethylallyladenosine(37) in tRNA + (sulfur carrier)-H + 5'-deoxyadenosine + L-methionine + A + S-adenosyl-L-homocysteine + 2 H(+). In terms of biological role, catalyzes the methylthiolation of N6-(dimethylallyl)adenosine (i(6)A), leading to the formation of 2-methylthio-N6-(dimethylallyl)adenosine (ms(2)i(6)A) at position 37 in tRNAs that read codons beginning with uridine. The sequence is that of tRNA-2-methylthio-N(6)-dimethylallyladenosine synthase from Campylobacter concisus (strain 13826).